A 242-amino-acid polypeptide reads, in one-letter code: Succinyl-CoA:3-ketoacid coenzyme A transferase subunit A (242 aa).

33 to 39 (GGFGLCG) provides a ligand contact to CoA.

This sequence belongs to the 3-oxoacid CoA-transferase subunit A family. In terms of assembly, heterodimer of a subunit A and a subunit B.

It carries out the reaction a 3-oxo acid + succinyl-CoA = a 3-oxoacyl-CoA + succinate. Its pathway is bacterial outer membrane biogenesis; lipopolysaccharide biosynthesis. This is Succinyl-CoA:3-ketoacid coenzyme A transferase subunit A (lpsI) from Xanthomonas campestris pv. campestris (strain B100).